Reading from the N-terminus, the 499-residue chain is Pentatricopeptide repeat-containing protein At5g61800 (499 aa).

PPR repeat units follow at residues 78–113 (STFCFNTIIRICTLHEPSSLSSKRFFVEMRRRSVPP), 114–150 (DFHTFPFVFKACAAKKNGDLTLVKTLHCQALRFGLLS), 151–181 (DLFTLNTLIRVYSLIAPIDSALQLFDENPQR), 182–212 (DVVTYNVLIDGLVKAREIVRARELFDSMPLR), 213–247 (DLVSWNSLISGYAQMNHCREAIKLFDEMVALGLKP), 248–282 (DNVAIVSTLSACAQSGDWQKGKAIHDYTKRKRLFI), 283–313 (DSFLATGLVDFYAKCGFIDTAMEIFELCSDK), 314–348 (TLFTWNAMITGLAMHGNGELTVDYFRKMVSSGIKP), 349–379 (DGVTFISVLVGCSHSGLVDEARNLFDQMRSL), and 385–419 (EMKHYGCMADLLGRAGLIEEAAEMIEQMPKDGGNR). A type E motif region spans residues 424–499 (AWSGLLGGCR…KNVGFSKVLS (76 aa)).

The protein belongs to the PPR family. PCMP-E subfamily.

This Arabidopsis thaliana (Mouse-ear cress) protein is Pentatricopeptide repeat-containing protein At5g61800 (PCMP-E8).